A 199-amino-acid polypeptide reads, in one-letter code: uncharacterized protein (199 aa).

4 helical membrane passes run 35–55 (CELA…IFYD), 57–77 (FVIF…YLEF), 94–114 (LSAA…IFFG), and 131–151 (YYGC…ASFA).

The protein localises to the membrane. This is an uncharacterized protein from Caenorhabditis elegans.